The primary structure comprises 94 residues: Co-chaperonin GroES (94 aa).

Heptamer of 7 subunits arranged in a ring. Interacts with the chaperonin GroEL.

The protein resides in the cytoplasm. Together with the chaperonin GroEL, plays an essential role in assisting protein folding. The GroEL-GroES system forms a nano-cage that allows encapsulation of the non-native substrate proteins and provides a physical environment optimized to promote and accelerate protein folding. GroES binds to the apical surface of the GroEL ring, thereby capping the opening of the GroEL channel. The chain is Co-chaperonin GroES from Thermoanaerobacter brockii (Thermoanaerobium brockii).